We begin with the raw amino-acid sequence, 447 residues long: Ion-translocating oxidoreductase complex subunit C (447 aa).

2 4Fe-4S ferredoxin-type domains span residues 359 to 389 (AEVLRDEATVCIHCARCVDVCPMNLLPGRIA) and 399 to 430 (RCREYFALNCIECGECAVVCPAKRHLVQLIRY). Positions 369, 372, 375, 379, 408, 411, 414, and 418 each coordinate [4Fe-4S] cluster.

The protein belongs to the 4Fe4S bacterial-type ferredoxin family. RnfC subfamily. The Rnf complex is probably composed of eight subunits, including RnfA, RnfB, RnfC, RnfD, RnfE and RnfG. The cofactor is [4Fe-4S] cluster.

It is found in the cell membrane. Part of a membrane-bound complex that couples electron transfer with translocation of ions across the membrane. Catalyzes Na(+) transport, most probably coupled to electron transfer from reduced ferredoxin to methanophenazine and heterodisulfide reductase. Involved in heterodisulfide reduction during methanogenesis from acetate. This Methanosarcina acetivorans (strain ATCC 35395 / DSM 2834 / JCM 12185 / C2A) protein is Ion-translocating oxidoreductase complex subunit C.